A 252-amino-acid chain; its full sequence is Imidazole glycerol phosphate synthase subunit HisF (252 aa).

Active-site residues include Asp-11 and Asp-130.

This sequence belongs to the HisA/HisF family. As to quaternary structure, heterodimer of HisH and HisF.

Its subcellular location is the cytoplasm. The enzyme catalyses 5-[(5-phospho-1-deoxy-D-ribulos-1-ylimino)methylamino]-1-(5-phospho-beta-D-ribosyl)imidazole-4-carboxamide + L-glutamine = D-erythro-1-(imidazol-4-yl)glycerol 3-phosphate + 5-amino-1-(5-phospho-beta-D-ribosyl)imidazole-4-carboxamide + L-glutamate + H(+). The protein operates within amino-acid biosynthesis; L-histidine biosynthesis; L-histidine from 5-phospho-alpha-D-ribose 1-diphosphate: step 5/9. Its function is as follows. IGPS catalyzes the conversion of PRFAR and glutamine to IGP, AICAR and glutamate. The HisF subunit catalyzes the cyclization activity that produces IGP and AICAR from PRFAR using the ammonia provided by the HisH subunit. The protein is Imidazole glycerol phosphate synthase subunit HisF of Desulforudis audaxviator (strain MP104C).